The following is a 235-amino-acid chain: Segregation and condensation protein A (235 aa).

Belongs to the ScpA family. Component of a cohesin-like complex composed of ScpA, ScpB and the Smc homodimer, in which ScpA and ScpB bind to the head domain of Smc. The presence of the three proteins is required for the association of the complex with DNA.

Its subcellular location is the cytoplasm. Participates in chromosomal partition during cell division. May act via the formation of a condensin-like complex containing Smc and ScpB that pull DNA away from mid-cell into both cell halves. This chain is Segregation and condensation protein A, found in Streptococcus equi subsp. zooepidemicus (strain MGCS10565).